A 351-amino-acid polypeptide reads, in one-letter code: Protein Wnt-8a (351 aa).

The N-terminal stretch at 1–24 is a signal peptide; that stretch reads MGNLFMLWAALGICCAAFSASAWS. A disulfide bridge links Cys-54 with Cys-65. A glycan (N-linked (GlcNAc...) asparagine) is linked at Asn-103. 10 cysteine pairs are disulfide-bonded: Cys-104-Cys-112, Cys-114-Cys-132, Cys-180-Cys-194, Cys-182-Cys-189, Cys-259-Cys-297, Cys-275-Cys-290, Cys-294-Cys-336, Cys-312-Cys-327, Cys-314-Cys-324, and Cys-319-Cys-320. Ser-186 carries O-palmitoleoyl serine lipidation. Residues Asn-262 and Asn-281 are each glycosylated (N-linked (GlcNAc...) asparagine).

Belongs to the Wnt family. As to quaternary structure, forms a soluble 1:1 complex with AFM; this prevents oligomerization and is required for prolonged biological activity. The complex with AFM may represent the physiological form in body fluids. In terms of processing, palmitoleoylation is required for efficient binding to frizzled receptors. Depalmitoleoylation leads to Wnt signaling pathway inhibition. Post-translationally, proteolytic processing by TIKI1 and TIKI2 promotes oxidation and formation of large disulfide-bond oligomers, leading to inactivation of WNT8A.

It localises to the secreted. The protein resides in the extracellular space. It is found in the extracellular matrix. Its function is as follows. Ligand for members of the frizzled family of seven transmembrane receptors. Plays a role in embryonic patterning. This Homo sapiens (Human) protein is Protein Wnt-8a (WNT8A).